Reading from the N-terminus, the 199-residue chain is Recombination protein RecR (199 aa).

The C4-type zinc-finger motif lies at 58–73; sequence CQTCRILSETDLCSLC. The 96-residue stretch at 81–176 folds into the Toprim domain; the sequence is GQLCVVEMPS…TTTRIAHGVP (96 aa).

Belongs to the RecR family.

In terms of biological role, may play a role in DNA repair. It seems to be involved in an RecBC-independent recombinational process of DNA repair. It may act with RecF and RecO. In Nitrosococcus oceani (strain ATCC 19707 / BCRC 17464 / JCM 30415 / NCIMB 11848 / C-107), this protein is Recombination protein RecR.